The primary structure comprises 133 residues: Small ribosomal subunit protein uS8 (133 aa).

It belongs to the universal ribosomal protein uS8 family. As to quaternary structure, part of the 30S ribosomal subunit.

In terms of biological role, one of the primary rRNA binding proteins, it binds directly to 16S rRNA central domain where it helps coordinate assembly of the platform of the 30S subunit. The polypeptide is Small ribosomal subunit protein uS8 (Aeropyrum pernix (strain ATCC 700893 / DSM 11879 / JCM 9820 / NBRC 100138 / K1)).